A 377-amino-acid chain; its full sequence is Actin-related protein T2 (377 aa).

It belongs to the actin family.

The protein resides in the cytoplasm. The protein localises to the cytoskeleton. This chain is Actin-related protein T2 (ACTRT2), found in Bos taurus (Bovine).